Reading from the N-terminus, the 342-residue chain is Olfactory receptor 51F2 (342 aa).

Residues 1-39 (MTETSLSSQCFPMSVLNNTIAEPLIFLLMGIPGLKATQY) lie on the Extracellular side of the membrane. N-linked (GlcNAc...) asparagine glycosylation occurs at Asn17. Residues 40 to 60 (WISIPFCLLYVVAVSGNSMIL) traverse the membrane as a helical segment. At 61–68 (FVVLCERS) the chain is on the cytoplasmic side. A helical membrane pass occupies residues 69–89 (LHKPMYYFLSMLSATDLSLSL). Over 90–113 (CTLSTTLGVFWFEAREINLNACIA) the chain is Extracellular. Cys111 and Cys203 are joined by a disulfide. The chain crosses the membrane as a helical span at residues 114-134 (QMFFLHGFTFMESGVLLAMAF). Topologically, residues 135-153 (DRFVAICYPLRYTTILTNA) are cytoplasmic. The helical transmembrane segment at 154 to 174 (RIAKIGMSMLIRNVAVMLPVM) threads the bilayer. Residues 175 to 210 (LFVKRLSFCSSMVLSHSYCYHVDLIQLSCTDNRINS) lie on the Extracellular side of the membrane. A helical membrane pass occupies residues 211–231 (ILGLFALLSTTGFDCPCILLS). Residues 232-251 (YILIIRSVLSIASSEERRKA) are Cytoplasmic-facing. The chain crosses the membrane as a helical span at residues 252–272 (FNTCTSHISAVSIFYLPLISL). At 273-287 (SLVHRYGHSAPPFVH) the chain is on the extracellular side. Residues 288-308 (IIMANVFLLIPPVLNPIIYSV) traverse the membrane as a helical segment. At 309–342 (KIKQIQKAIIKVLIQKHSKSNHQLFLIRDKAIYE) the chain is on the cytoplasmic side.

Belongs to the G-protein coupled receptor 1 family.

It is found in the cell membrane. Odorant receptor. This is Olfactory receptor 51F2 (OR51F2) from Homo sapiens (Human).